Consider the following 274-residue polypeptide: Probable WRKY transcription factor 49 (274 aa).

The segment at residues Asn-108–Tyr-173 is a DNA-binding region (WRKY). The disordered stretch occupies residues Lys-188–Gln-228. The stretch at Lys-193–His-222 forms a coiled coil. The segment covering Asn-195–Gln-213 has biased composition (basic and acidic residues). Residues Glu-216–Gln-228 show a composition bias toward polar residues.

The protein belongs to the WRKY group II-c family.

It localises to the nucleus. Functionally, transcription factor. Interacts specifically with the W box (5'-(T)TGAC[CT]-3'), a frequently occurring elicitor-responsive cis-acting element. The protein is Probable WRKY transcription factor 49 (WRKY49) of Arabidopsis thaliana (Mouse-ear cress).